The following is a 390-amino-acid chain: 3-ketoacyl-CoA thiolase (390 aa).

The active-site Acyl-thioester intermediate is Cys95. Residues His346 and Cys376 each act as proton acceptor in the active site.

The protein belongs to the thiolase-like superfamily. Thiolase family. Heterotetramer of two alpha chains (FadB) and two beta chains (FadA).

It is found in the cytoplasm. The catalysed reaction is an acyl-CoA + acetyl-CoA = a 3-oxoacyl-CoA + CoA. The protein operates within lipid metabolism; fatty acid beta-oxidation. In terms of biological role, catalyzes the final step of fatty acid oxidation in which acetyl-CoA is released and the CoA ester of a fatty acid two carbons shorter is formed. The polypeptide is 3-ketoacyl-CoA thiolase (Psychrobacter arcticus (strain DSM 17307 / VKM B-2377 / 273-4)).